Consider the following 107-residue polypeptide: U1-lycotoxin-Ls1f (107 aa).

Positions 1 to 20 are cleaved as a signal peptide; the sequence is MMKVLVVVALLVTLISYSSS. The propeptide occupies 21 to 41; sequence EGIDDLEADELLSLMANEQTR. 4 disulfide bridges follow: C44–C59, C51–C68, C58–C86, and C70–C84.

It belongs to the neurotoxin 19 (CSTX) family. 04 (U1-Lctx) subfamily. In terms of tissue distribution, expressed by the venom gland.

Its subcellular location is the secreted. This chain is U1-lycotoxin-Ls1f, found in Lycosa singoriensis (Wolf spider).